The sequence spans 249 residues: ATP synthase subunit a (249 aa).

The next 6 helical transmembrane spans lie at 30 to 50 (SAYM…GVAG), 84 to 104 (FFPL…VGII), 114 to 134 (LIVT…YGFY), 143 to 163 (IFVP…IEVF), 196 to 216 (LLAG…GMVI), and 221 to 241 (LELL…CIYL).

Belongs to the ATPase A chain family. F-type ATPases have 2 components, CF(1) - the catalytic core - and CF(0) - the membrane proton channel. CF(1) has five subunits: alpha(3), beta(3), gamma(1), delta(1), epsilon(1). CF(0) has four main subunits: a, b, b' and c.

It localises to the cell inner membrane. Functionally, key component of the proton channel; it plays a direct role in the translocation of protons across the membrane. The polypeptide is ATP synthase subunit a (Rhodopseudomonas palustris (strain BisB18)).